Reading from the N-terminus, the 473-residue chain is ATP synthase subunit beta (473 aa).

Residue 158 to 165 (GGAGVGKT) coordinates ATP.

Belongs to the ATPase alpha/beta chains family. In terms of assembly, F-type ATPases have 2 components, CF(1) - the catalytic core - and CF(0) - the membrane proton channel. CF(1) has five subunits: alpha(3), beta(3), gamma(1), delta(1), epsilon(1). CF(0) has three main subunits: a(1), b(2) and c(9-12). The alpha and beta chains form an alternating ring which encloses part of the gamma chain. CF(1) is attached to CF(0) by a central stalk formed by the gamma and epsilon chains, while a peripheral stalk is formed by the delta and b chains.

It is found in the cell membrane. It carries out the reaction ATP + H2O + 4 H(+)(in) = ADP + phosphate + 5 H(+)(out). Produces ATP from ADP in the presence of a proton gradient across the membrane. The catalytic sites are hosted primarily by the beta subunits. The protein is ATP synthase subunit beta of Bacillus caldotenax.